We begin with the raw amino-acid sequence, 252 residues long: Imidazole glycerol phosphate synthase subunit HisF (252 aa).

Active-site residues include Asp-11 and Asp-130.

It belongs to the HisA/HisF family. Heterodimer of HisH and HisF.

The protein resides in the cytoplasm. The enzyme catalyses 5-[(5-phospho-1-deoxy-D-ribulos-1-ylimino)methylamino]-1-(5-phospho-beta-D-ribosyl)imidazole-4-carboxamide + L-glutamine = D-erythro-1-(imidazol-4-yl)glycerol 3-phosphate + 5-amino-1-(5-phospho-beta-D-ribosyl)imidazole-4-carboxamide + L-glutamate + H(+). The protein operates within amino-acid biosynthesis; L-histidine biosynthesis; L-histidine from 5-phospho-alpha-D-ribose 1-diphosphate: step 5/9. Its function is as follows. IGPS catalyzes the conversion of PRFAR and glutamine to IGP, AICAR and glutamate. The HisF subunit catalyzes the cyclization activity that produces IGP and AICAR from PRFAR using the ammonia provided by the HisH subunit. The polypeptide is Imidazole glycerol phosphate synthase subunit HisF (Paramagnetospirillum magneticum (strain ATCC 700264 / AMB-1) (Magnetospirillum magneticum)).